A 393-amino-acid polypeptide reads, in one-letter code: Double-stranded RNA-binding protein 5 (393 aa).

DRBM domains lie at 1–70 (MYKN…VLSS) and 87–155 (IYKN…SLKK). Disordered stretches follow at residues 220-251 (ASSSSSTSTPNQHKNSSFISLIPPPPPPKSSK) and 335-371 (NPNLNPSSLSSSVNEFTSSNNSCSVLNTPGLGGQEKK). Residues 347-361 (VNEFTSSNNSCSVLN) show a composition bias toward polar residues.

In terms of assembly, heterodimer with DRB1, DRB2 or DRB4. Interacts with DCL1 and DCL3. As to expression, expressed in the shoot apical meristem (SAM).

Its function is as follows. Binds double-stranded RNA. May be involved in RNA-mediated silencing. The protein is Double-stranded RNA-binding protein 5 (DRB5) of Arabidopsis thaliana (Mouse-ear cress).